The primary structure comprises 197 residues: Isopentenyl-diphosphate Delta-isomerase (197 aa).

Mn(2+)-binding residues include histidine 41 and histidine 48. The Nudix hydrolase domain maps to 46 to 183; sequence RLHRAFSVFL…AWFMTVLDAA (138 aa). Residue cysteine 83 is part of the active site. Cysteine 83 is a binding site for Mg(2+). Residue histidine 85 participates in Mn(2+) binding. Mg(2+) is bound at residue glutamate 103. 2 residues coordinate Mn(2+): glutamate 130 and glutamate 132. Glutamate 132 is an active-site residue.

This sequence belongs to the IPP isomerase type 1 family. Mg(2+) is required as a cofactor. Requires Mn(2+) as cofactor.

It localises to the cytoplasm. The catalysed reaction is isopentenyl diphosphate = dimethylallyl diphosphate. Its pathway is isoprenoid biosynthesis; dimethylallyl diphosphate biosynthesis; dimethylallyl diphosphate from isopentenyl diphosphate: step 1/1. Catalyzes the 1,3-allylic rearrangement of the homoallylic substrate isopentenyl (IPP) to its highly electrophilic allylic isomer, dimethylallyl diphosphate (DMAPP). The polypeptide is Isopentenyl-diphosphate Delta-isomerase (Streptomyces coelicolor (strain ATCC BAA-471 / A3(2) / M145)).